A 50-amino-acid polypeptide reads, in one-letter code: Light-harvesting protein B-880 alpha chain (50 aa).

The Cytoplasmic portion of the chain corresponds to 1 to 12 (MYKLWLLFDPRR). Residues 13–33 (ALVALSAFLFVLALIIHFIAL) form a helical membrane-spanning segment. His29 contributes to the a bacteriochlorophyll binding site. The Periplasmic segment spans residues 34–50 (STDRFNWLEGKPAVKAA).

The protein belongs to the antenna complex alpha subunit family. The core complex is formed by different alpha and beta chains, binding bacteriochlorophyll molecules, and arranged most probably in tetrameric structures disposed around the reaction center. The non-pigmented gamma chains may constitute additional components.

It localises to the cell inner membrane. In terms of biological role, antenna complexes are light-harvesting systems, which transfer the excitation energy to the reaction centers. This chain is Light-harvesting protein B-880 alpha chain, found in Rhodoblastus acidophilus (Rhodopseudomonas acidophila).